Here is a 247-residue protein sequence, read N- to C-terminus: Type III pantothenate kinase (247 aa).

ATP is bound at residue 7 to 14 (AIGNSRWH). Substrate is bound by residues Tyr-91 and 95 to 98 (GLDR). The Proton acceptor role is filled by Asp-97. Asp-117 is a binding site for K(+). Thr-120 is an ATP binding site. Thr-172 contacts substrate.

It belongs to the type III pantothenate kinase family. As to quaternary structure, homodimer. It depends on NH4(+) as a cofactor. K(+) serves as cofactor.

It localises to the cytoplasm. It carries out the reaction (R)-pantothenate + ATP = (R)-4'-phosphopantothenate + ADP + H(+). It functions in the pathway cofactor biosynthesis; coenzyme A biosynthesis; CoA from (R)-pantothenate: step 1/5. Its function is as follows. Catalyzes the phosphorylation of pantothenate (Pan), the first step in CoA biosynthesis. In Synechococcus elongatus (strain ATCC 33912 / PCC 7942 / FACHB-805) (Anacystis nidulans R2), this protein is Type III pantothenate kinase.